The sequence spans 638 residues: Epithelial sodium channel subunit beta (638 aa).

Residues 1 to 50 (MPVKKYLLKCLHRLQKGPGYTYKELLVWYCNNTNTHGPKRIICEGPKKKA) are Cytoplasmic-facing. The chain crosses the membrane as a helical span at residues 51–71 (MWFLLTLLFACLVCWQWGVFI). The Extracellular segment spans residues 72–530 (QTYLSWEVSV…GGQFGFWMGG (459 aa)). Disulfide bonds link Cys98–Cys270, Cys182–Cys187, Cys194–Cys201, Cys247–Cys254, Cys359–Cys446, Cys384–Cys442, Cys388–Cys438, Cys397–Cys424, and Cys399–Cys413. Residues Asn135 and Asn141 are each glycosylated (N-linked (GlcNAc...) asparagine). N-linked (GlcNAc...) asparagine glycosylation is present at Asn205. Residues 531 to 551 (SVLCLIEFGEIIIDFIWITII) form a helical membrane-spanning segment. The Cytoplasmic portion of the chain corresponds to 552-638 (KLVASCKGLR…MESDSEVEAI (87 aa)). A disordered region spans residues 594–620 (SCRPHGEVYPDQQTLPIPGTPPPNYDS). Positions 614 to 618 (PPPNY) match the PY motif; recruits WW domain-containing proteins and is thereby required for ubiquitination and inhibition of the channel by NEDD4 and NEDD4L motif. Phosphoserine occurs at positions 631 and 633.

It belongs to the amiloride-sensitive sodium channel (TC 1.A.6) family. SCNN1B subfamily. As to quaternary structure, component of the heterotrimeric epithelial sodium channel (ENaC) composed of an alpha/SCNN1A, a beta/SCNN1B and a gamma/SCNN1G subunit. Interacts with WWP1 (via WW domains). Interacts with WWP2 (via WW domains); inhibits the channel. Interacts with the full-length immature form of PCSK9 (pro-PCSK9). Interacts (N-glycosylated) with BPIFA1; the interaction is direct and inhibits the proteolytic processing of SCNN1A and SCNN1G and the activation of ENaC. In terms of processing, ubiquitinated. Can be ubiquitinated at multiple sites and undergo monoubiquitination and polyubiquitination. Ubiquitination by NEDD4 or NEDD4L inhibits the ENaC channel through endocytosis, intracellular retention and degradation of its individual subunits. However, some studies could not confirm the ubiquitination of this subunit of the ENaC. N-glycosylated. N-glycosylation is required for interaction with BPIFA1. Post-translationally, phosphorylated on serine and threonine residues. Aldosterone and insulin increase the basal level of phosphorylation. In terms of tissue distribution, lung and kidney.

The protein resides in the apical cell membrane. Its subcellular location is the cytoplasmic vesicle membrane. The enzyme catalyses Na(+)(in) = Na(+)(out). With respect to regulation, originally identified and characterized by its inhibition by the diuretic drug amiloride. In terms of biological role, this is one of the three pore-forming subunits of the heterotrimeric epithelial sodium channel (ENaC), a critical regulator of sodium balance and fluid homeostasis. ENaC operates in epithelial tissues, where it mediates the electrodiffusion of sodium ions from extracellular fluid through the apical membrane of cells, with water following osmotically. It plays a key role in maintaining sodium homeostasis through electrogenic sodium reabsorption in the kidneys. This subunit is not essential for ENaC function in airway surface liquid homeostasis and proper mucus clearance. The sequence is that of Epithelial sodium channel subunit beta from Mus musculus (Mouse).